The chain runs to 423 residues: Tubulin beta-2 chain (423 aa).

The GTP site is built by Glu-44, Ser-113, Gly-117, Thr-118, Gly-119, Asn-179, and Asn-201. Glu-44 serves as a coordination point for Mg(2+). The segment at 394-423 (VSEYQQYQDATAEEEGEYDEDEDDEGGDYA) is disordered. Residues 404 to 423 (TAEEEGEYDEDEDDEGGDYA) are compositionally biased toward acidic residues.

The protein belongs to the tubulin family. Dimer of alpha and beta chains. A typical microtubule is a hollow water-filled tube with an outer diameter of 25 nm and an inner diameter of 15 nM. Alpha-beta heterodimers associate head-to-tail to form protofilaments running lengthwise along the microtubule wall with the beta-tubulin subunit facing the microtubule plus end conferring a structural polarity. Microtubules usually have 13 protofilaments but different protofilament numbers can be found in some organisms and specialized cells. It depends on Mg(2+) as a cofactor.

The protein resides in the cytoplasm. It is found in the cytoskeleton. Functionally, tubulin is the major constituent of microtubules, a cylinder consisting of laterally associated linear protofilaments composed of alpha- and beta-tubulin heterodimers. Microtubules grow by the addition of GTP-tubulin dimers to the microtubule end, where a stabilizing cap forms. Below the cap, tubulin dimers are in GDP-bound state, owing to GTPase activity of alpha-tubulin. This chain is Tubulin beta-2 chain (TUBB2), found in Oomycete-like sp. (strain MacKay2000).